A 257-amino-acid chain; its full sequence is MAIHPTAVVEPGAQVDPSAEIGALAVVGPHVRVGPRTVVGPHAVLAGRTTLGEGNRIFPHAVVGEVPQDLKYRGEPTELVVGDRNTFREGVTISTGTVQGGGVTRIGSGCLFMANSHVGHDCVIGDGAIIANSVALAGHVELEDHVHFSGLAAAHQFCRIGRLAFVSGLTGVTMDVPPFCTVAGPRAELAGLNAVGMQRAGLSEERIGRVKQAYKIVFRSNLGLAEAIAQVEAELGMHEDVAHFVRFLKGTQRGITR.

Belongs to the transferase hexapeptide repeat family. LpxA subfamily. In terms of assembly, homotrimer.

It localises to the cytoplasm. It catalyses the reaction a (3R)-hydroxyacyl-[ACP] + UDP-N-acetyl-alpha-D-glucosamine = a UDP-3-O-[(3R)-3-hydroxyacyl]-N-acetyl-alpha-D-glucosamine + holo-[ACP]. It functions in the pathway glycolipid biosynthesis; lipid IV(A) biosynthesis; lipid IV(A) from (3R)-3-hydroxytetradecanoyl-[acyl-carrier-protein] and UDP-N-acetyl-alpha-D-glucosamine: step 1/6. Involved in the biosynthesis of lipid A, a phosphorylated glycolipid that anchors the lipopolysaccharide to the outer membrane of the cell. This is Acyl-[acyl-carrier-protein]--UDP-N-acetylglucosamine O-acyltransferase from Anaeromyxobacter sp. (strain Fw109-5).